The sequence spans 1741 residues: Meiosis regulator and mRNA stability factor 1 (1741 aa).

In terms of domain architecture, NYN spans 345–482 (IGVFWDIENC…ALLHHAHELV (138 aa)). Disordered stretches follow at residues 594–636 (KVKS…GSVI), 659–678 (TENHQEHLREIPSQNNSHAA), and 683–716 (LTTKKSGVGESSCKSSYKKETSVSRSMTNSPVDK). The span at 659–668 (TENHQEHLRE) shows a compositional bias: basic and acidic residues. One can recognise an RRM domain in the interval 788-867 (ADIQISNIDY…KRIQVSLATG (80 aa)). HTH OST-type domains lie at 872–946 (SLSL…SPLG), 1000–1076 (SLKT…HNKP), 1097–1171 (QLIQ…LTHR), 1173–1248 (QVKR…IPKR), 1257–1332 (RTKQ…TEVE), 1333–1408 (QVKA…INRK), 1409–1483 (SLRT…VRLT), and 1484–1558 (NLYM…LKND). Positions 1684–1700 (KLTSGSVASSTAENTSV) are enriched in polar residues. Positions 1684-1727 (KLTSGSVASSTAENTSVPPRHSSETQLNKEAMDSPAKKQHKNKV) are disordered.

The protein localises to the peroxisome. In terms of biological role, essential regulator of oogenesis required for female meiotic progression to repress transposable elements and preventing their mobilization, which is essential for the germline integrity. The polypeptide is Meiosis regulator and mRNA stability factor 1 (Gallus gallus (Chicken)).